We begin with the raw amino-acid sequence, 467 residues long: MSALRSFQRSSNVAKSTLKNSVRTYATAEPTLKQRLEEILPAKAEEVKQLKKDYGKTVIGEVLLEQAYGGMRGIKGLVWEGSVLDPIEGIRFRGRTIPDIQKELPKAPGGEEPLPEALFWLLLTGEVPTEAQTRALSEEFAARSALPKHVEELIDRSPSHLHPMAQFSIAVTALESESQFAKAYAKGVHKSEYWKYTYEDSIELLAKLPTIAAKIYRNVFHDGKLPAQIDSKLDYGANLASLLGFGENKEFLELMRLYLTIHSDHEGGNVSAHTTHLVGSALSSPFLSLAAGLNGLAGPLHGRANQEVLEWLFKLREELNGDYSKEAIEKYLWDTLNAGRVGPGYGHAVLRKTDPRYTAQREFALKHMPDYELFKLVSNIYEVAPGVFDQHGMTKNPWPNVGSHSGVLLQYYGLTEESFYTVLFGVSRAFGVLPQLILDRGLGMPIERPKSFSTEKYIELVKSIGKN.

Residues His-301 and His-347 contribute to the active site.

The protein belongs to the citrate synthase family.

The protein resides in the mitochondrion matrix. The catalysed reaction is oxaloacetate + acetyl-CoA + H2O = citrate + CoA + H(+). Its pathway is carbohydrate metabolism; tricarboxylic acid cycle; isocitrate from oxaloacetate: step 1/2. In Candida tropicalis (Yeast), this protein is Citrate synthase, mitochondrial (CIT).